A 672-amino-acid polypeptide reads, in one-letter code: uncharacterized protein (672 aa).

A compositionally biased stretch (basic and acidic residues) spans 1–10; it reads MAKSDGDDPL. The segment at 1-41 is disordered; sequence MAKSDGDDPLRPASPRLRSSRRHSLRYSAYTGGPDPLAPPV.

This is an uncharacterized protein from Mycobacterium bovis (strain ATCC BAA-935 / AF2122/97).